Consider the following 427-residue polypeptide: Enolase (427 aa).

Gln-163 lines the (2R)-2-phosphoglycerate pocket. Glu-205 serves as the catalytic Proton donor. Positions 242, 285, and 312 each coordinate Mg(2+). Residues Lys-337, Arg-366, Ser-367, and Lys-388 each contribute to the (2R)-2-phosphoglycerate site. Catalysis depends on Lys-337, which acts as the Proton acceptor.

The protein belongs to the enolase family. It depends on Mg(2+) as a cofactor.

Its subcellular location is the cytoplasm. The protein resides in the secreted. It localises to the cell surface. The catalysed reaction is (2R)-2-phosphoglycerate = phosphoenolpyruvate + H2O. The protein operates within carbohydrate degradation; glycolysis; pyruvate from D-glyceraldehyde 3-phosphate: step 4/5. Functionally, catalyzes the reversible conversion of 2-phosphoglycerate (2-PG) into phosphoenolpyruvate (PEP). It is essential for the degradation of carbohydrates via glycolysis. The polypeptide is Enolase (Methylocella silvestris (strain DSM 15510 / CIP 108128 / LMG 27833 / NCIMB 13906 / BL2)).